Here is a 522-residue protein sequence, read N- to C-terminus: MTDFAARLKQVASNPEVFKQFGRGVERETLRYRQDGHLATTPHPEGLGSAFTNKWITTDFSESLLEFITPVSHEIPELMGQLKDIHHFTQTKMGEEKMWPLSMPCYVGSEDDIQLAQYGSSNSAKMKTLYREGLKRRYGSLMQIISGVHFNFSFPESFWDALHGEQDEEARQDTKSDAYFALIRNYYRFGWMIPYFFGASPALCGSFIQGRETDLPFEKIGGTLFLPKATSLRLSDLGYTNSAQSVLKIGFNSIDQYLDGLSDAIRRPSEEFAEIGVKVDGEYRQLNSNILQIENELYAPIRPKRVTKSGEKPSEALQRGGVEYIEVRSLDVNPFSAVGVSEEQVRFLDLFLTWAALSDSDPMDNCELECWRDNWNKVIVSGREKGLMLQIGCQGERLSLQDWAHRVFADLRQIAVEMDSAAGGNAYQAVCDKLESWIDEPELTISGQLLELTKEHGGLGKVGCALGMKFREENLAHSYEQYSADAMETEVATSLEKQKQAEQSDTLSFDDFLEDYFAYLKQ.

This sequence belongs to the glutamate--cysteine ligase type 1 family. Type 1 subfamily.

It catalyses the reaction L-cysteine + L-glutamate + ATP = gamma-L-glutamyl-L-cysteine + ADP + phosphate + H(+). It participates in sulfur metabolism; glutathione biosynthesis; glutathione from L-cysteine and L-glutamate: step 1/2. The chain is Glutamate--cysteine ligase from Vibrio campbellii (strain ATCC BAA-1116).